The sequence spans 388 residues: 1-deoxy-D-xylulose 5-phosphate reductoisomerase (388 aa).

Residues T10, G11, S12, I13, N37, and N121 each contribute to the NADPH site. K122 lines the 1-deoxy-D-xylulose 5-phosphate pocket. E123 contacts NADPH. D147 serves as a coordination point for Mn(2+). 1-deoxy-D-xylulose 5-phosphate-binding residues include S148, E149, S173, and H196. Residue E149 coordinates Mn(2+). Residue G202 coordinates NADPH. 1-deoxy-D-xylulose 5-phosphate contacts are provided by S209, N214, K215, and E218. Residue E218 coordinates Mn(2+).

It belongs to the DXR family. Mg(2+) is required as a cofactor. Mn(2+) serves as cofactor.

It catalyses the reaction 2-C-methyl-D-erythritol 4-phosphate + NADP(+) = 1-deoxy-D-xylulose 5-phosphate + NADPH + H(+). Its pathway is isoprenoid biosynthesis; isopentenyl diphosphate biosynthesis via DXP pathway; isopentenyl diphosphate from 1-deoxy-D-xylulose 5-phosphate: step 1/6. Catalyzes the NADPH-dependent rearrangement and reduction of 1-deoxy-D-xylulose-5-phosphate (DXP) to 2-C-methyl-D-erythritol 4-phosphate (MEP). This is 1-deoxy-D-xylulose 5-phosphate reductoisomerase from Lachnoclostridium phytofermentans (strain ATCC 700394 / DSM 18823 / ISDg) (Clostridium phytofermentans).